A 721-amino-acid chain; its full sequence is Polyribonucleotide nucleotidyltransferase (721 aa).

Residues Asp-495 and Asp-501 each coordinate Mg(2+). The region spanning 562-621 (PRLLSFRIDPELIGTVIGPGGRTIKGITERTNTKIDIEDGGIVTIASHDGAAAEEAQKII) is the KH domain. Positions 631–699 (GEIFTGVVTR…SRGRINLTLR (69 aa)) constitute an S1 motif domain. A disordered region spans residues 702–721 (SQNSGMSYPEPTPTPVAPLN). The span at 711 to 721 (EPTPTPVAPLN) shows a compositional bias: pro residues.

Belongs to the polyribonucleotide nucleotidyltransferase family. Mg(2+) serves as cofactor.

It is found in the cytoplasm. It catalyses the reaction RNA(n+1) + phosphate = RNA(n) + a ribonucleoside 5'-diphosphate. Functionally, involved in mRNA degradation. Catalyzes the phosphorolysis of single-stranded polyribonucleotides processively in the 3'- to 5'-direction. The protein is Polyribonucleotide nucleotidyltransferase of Prochlorococcus marinus (strain MIT 9312).